A 471-amino-acid chain; its full sequence is Uronate isomerase (471 aa).

This sequence belongs to the metallo-dependent hydrolases superfamily. Uronate isomerase family.

The catalysed reaction is D-glucuronate = D-fructuronate. It carries out the reaction aldehydo-D-galacturonate = keto-D-tagaturonate. The protein operates within carbohydrate metabolism; pentose and glucuronate interconversion. This is Uronate isomerase from Cellvibrio japonicus (strain Ueda107) (Pseudomonas fluorescens subsp. cellulosa).